The chain runs to 283 residues: Formamidopyrimidine-DNA glycosylase (283 aa).

Catalysis depends on P2, which acts as the Schiff-base intermediate with DNA. E3 functions as the Proton donor in the catalytic mechanism. K61 acts as the Proton donor; for beta-elimination activity in catalysis. Residues H94, R113, and K159 each coordinate DNA. The segment at 245 to 279 (DAYGREGESCRRCGAVMRREKFMNRSSFYCPKCQP) adopts an FPG-type zinc-finger fold. The active-site Proton donor; for delta-elimination activity is the R269.

Belongs to the FPG family. In terms of assembly, monomer. Zn(2+) is required as a cofactor.

The enzyme catalyses Hydrolysis of DNA containing ring-opened 7-methylguanine residues, releasing 2,6-diamino-4-hydroxy-5-(N-methyl)formamidopyrimidine.. It carries out the reaction 2'-deoxyribonucleotide-(2'-deoxyribose 5'-phosphate)-2'-deoxyribonucleotide-DNA = a 3'-end 2'-deoxyribonucleotide-(2,3-dehydro-2,3-deoxyribose 5'-phosphate)-DNA + a 5'-end 5'-phospho-2'-deoxyribonucleoside-DNA + H(+). Its function is as follows. Involved in base excision repair of DNA damaged by oxidation or by mutagenic agents. Acts as a DNA glycosylase that recognizes and removes damaged bases. Has a preference for oxidized purines, such as 7,8-dihydro-8-oxoguanine (8-oxoG). Has AP (apurinic/apyrimidinic) lyase activity and introduces nicks in the DNA strand. Cleaves the DNA backbone by beta-delta elimination to generate a single-strand break at the site of the removed base with both 3'- and 5'-phosphates. The chain is Formamidopyrimidine-DNA glycosylase from Mycolicibacterium paratuberculosis (strain ATCC BAA-968 / K-10) (Mycobacterium paratuberculosis).